We begin with the raw amino-acid sequence, 388 residues long: 1-deoxy-D-xylulose 5-phosphate reductoisomerase (388 aa).

5 residues coordinate NADPH: T15, G16, S17, I18, and N127. A 1-deoxy-D-xylulose 5-phosphate-binding site is contributed by K128. E129 provides a ligand contact to NADPH. D153 is a binding site for Mn(2+). Residues S154, E155, S179, and H202 each coordinate 1-deoxy-D-xylulose 5-phosphate. E155 contributes to the Mn(2+) binding site. Position 208 (G208) interacts with NADPH. The 1-deoxy-D-xylulose 5-phosphate site is built by S215, N220, K221, and E224. Position 224 (E224) interacts with Mn(2+).

The protein belongs to the DXR family. Requires Mg(2+) as cofactor. Mn(2+) is required as a cofactor.

It carries out the reaction 2-C-methyl-D-erythritol 4-phosphate + NADP(+) = 1-deoxy-D-xylulose 5-phosphate + NADPH + H(+). It functions in the pathway isoprenoid biosynthesis; isopentenyl diphosphate biosynthesis via DXP pathway; isopentenyl diphosphate from 1-deoxy-D-xylulose 5-phosphate: step 1/6. In terms of biological role, catalyzes the NADPH-dependent rearrangement and reduction of 1-deoxy-D-xylulose-5-phosphate (DXP) to 2-C-methyl-D-erythritol 4-phosphate (MEP). This chain is 1-deoxy-D-xylulose 5-phosphate reductoisomerase, found in Bacteroides fragilis (strain YCH46).